The following is a 409-amino-acid chain: DNA polymerase IV 2 (409 aa).

The UmuC domain occupies 5–190; that stretch reads IFMVDMESFF…LPIECLYGVG (186 aa). Asp9 and Asp105 together coordinate Mg(2+). Glu106 is an active-site residue.

This sequence belongs to the DNA polymerase type-Y family. In terms of assembly, monomer. It depends on Mg(2+) as a cofactor.

The protein localises to the cytoplasm. It catalyses the reaction DNA(n) + a 2'-deoxyribonucleoside 5'-triphosphate = DNA(n+1) + diphosphate. Its function is as follows. Poorly processive, error-prone DNA polymerase involved in untargeted mutagenesis. Copies undamaged DNA at stalled replication forks, which arise in vivo from mismatched or misaligned primer ends. These misaligned primers can be extended by PolIV. Exhibits no 3'-5' exonuclease (proofreading) activity. May be involved in translesional synthesis, in conjunction with the beta clamp from PolIII. In Halalkalibacterium halodurans (strain ATCC BAA-125 / DSM 18197 / FERM 7344 / JCM 9153 / C-125) (Bacillus halodurans), this protein is DNA polymerase IV 2 (dinB2).